The sequence spans 198 residues: 8-oxoguanine DNA glycosylase/AP lyase (198 aa).

Catalysis depends on residues lysine 122 and aspartate 140.

It belongs to the type-2 OGG1 family. As to quaternary structure, monomer.

It catalyses the reaction 2'-deoxyribonucleotide-(2'-deoxyribose 5'-phosphate)-2'-deoxyribonucleotide-DNA = a 3'-end 2'-deoxyribonucleotide-(2,3-dehydro-2,3-deoxyribose 5'-phosphate)-DNA + a 5'-end 5'-phospho-2'-deoxyribonucleoside-DNA + H(+). Its function is as follows. Catalyzes the excision of an oxidatively damaged form of guanine (7,8-dihydro-8-oxoguanine = 8-oxoG) from DNA. Also cleaves the DNA backbone at apurinic/apyrimidinic sites (AP sites). Efficiently cleaves oligomers containing 8-oxoG:C and 8-oxoG:G base pairs, and is less effective on oligomers containing 8-oxoG:T and 8-oxoG:A mispairs. The sequence is that of 8-oxoguanine DNA glycosylase/AP lyase from Archaeoglobus fulgidus (strain ATCC 49558 / DSM 4304 / JCM 9628 / NBRC 100126 / VC-16).